The following is a 387-amino-acid chain: Sedoheptulose-1,7-bisphosphatase, chloroplastic (387 aa).

Residues C109 and C114 are joined by a disulfide bond. Mg(2+)-binding residues include D120, E149, D170, L172, and D173. Residues 173 to 176 (DGSS), Y284, and K314 contribute to the substrate site. Position 320 (E320) interacts with Mg(2+).

This sequence belongs to the FBPase class 1 family. In terms of assembly, homodimer. Mg(2+) is required as a cofactor.

Its subcellular location is the plastid. It localises to the chloroplast. It carries out the reaction D-sedoheptulose 1,7-bisphosphate + H2O = D-sedoheptulose 7-phosphate + phosphate. The protein operates within carbohydrate biosynthesis; Calvin cycle. The polypeptide is Sedoheptulose-1,7-bisphosphatase, chloroplastic (Spinacia oleracea (Spinach)).